The sequence spans 918 residues: Interleukin-6 receptor subunit beta (918 aa).

Residues 1-22 (MSALRIWLMQALLIFLTTESIG) form the signal peptide. Residues 23–618 (QLVEPCGYIY…TLKFAQGEIE (596 aa)) are Extracellular-facing. The 95-residue stretch at 26 to 120 (EPCGYIYPEF…IEQNVYGITI (95 aa)) folds into the Ig-like C2-type domain. 2 disulfide bridges follow: C28/C54 and C48/C103. 4 N-linked (GlcNAc...) asparagine glycosylation sites follow: N43, N61, N83, and N131. Fibronectin type-III domains lie at 125–215 (PPDI…NFDP), 223–323 (PPHN…TYED), 328–418 (APSF…IPGS), 422–516 (ASHP…LKQA), and 518–612 (PSKG…TLKF). Residues C134 and C144 are joined by a disulfide bond. N157 carries N-linked (GlcNAc...) asparagine glycosylation. C172 and C181 are disulfide-bonded. 2 N-linked (GlcNAc...) asparagine glycosylation sites follow: N205 and N226. The short motif at 309-313 (WSDWS) is the WSXWS motif element. N-linked (GlcNAc...) asparagine glycans are attached at residues N382 and N389. Cysteines 457 and 465 form a disulfide. Residues N477 and N552 are each glycosylated (N-linked (GlcNAc...) asparagine). A helical transmembrane segment spans residues 619-640 (AIVVPVCLAFLLTTLLGVLFCF). At 641 to 918 (NKRDLIKKHI…TVRQGGYMPQ (278 aa)) the chain is on the cytoplasmic side. A Box 1 motif motif is present at residues 650-658 (IWPNVPDPS). 4 disordered regions span residues 659–679 (KSHIAQWSPHTPPRHNFNSKD), 720–754 (TEGHSSGIGGSSCMSSSRPSISSSEENESAQSTAS), 773–795 (VQVFSRSESTQPLLDSEERPEDL), and 817–842 (SCSQPGASPDVSHFGRSSQVPSGSEE). Phosphoserine is present on residues S660 and S666. A compositionally biased stretch (low complexity) spans 730–751 (SSCMSSSRPSISSSEENESAQS). Residues 773 to 785 (VQVFSRSESTQPL) are compositionally biased toward polar residues. A phosphoserine mark is found at S781, S788, S828, and S838.

Belongs to the type I cytokine receptor family. Type 2 subfamily. Component of a hexamer of two molecules each of IL6, IL6R and IL6ST; associates with the complex IL6:IL6R but does not interact with IL6. Forms heterodimers composed of LIFR and IL6ST (type I OSM receptor) which are activated by LIF and OSM. Also forms heterodimers composed of OSMR and IL6ST (type II receptor) which are activated by OSM but not by LIF. Interacts with HCK. Interacts with INPP5D/SHIP1. Interacts with SRC and YES. Interacts with ARMH4; this interaction prevents IL6ST protein homodimerization and bridges ARMH4 with IL6R and STAT3 and therefore inhibits phosphorylation of STAT3 at 'Tyr-705'. In terms of processing, phosphorylation of Ser-781 down-regulates cell surface expression. Post-translationally, heavily N-glycosylated. Glycosylation is required for protein stability and localization in plasma membrane but not for ligand binding. In terms of tissue distribution, found in hepatocytes, astrocytes, fibroblasts and endothelial cells.

The protein resides in the cell membrane. Signal-transducing molecule. The receptor systems for IL6, LIF, OSM, CNTF, IL11, CTF1 and BSF3 can utilize IL6ST for initiating signal transmission. Binding of IL6 to IL6R induces IL6ST homodimerization and formation of a high-affinity receptor complex, which activates the intracellular JAK-MAPK and JAK-STAT3 signaling pathways. That causes phosphorylation of IL6ST tyrosine residues which in turn activates STAT3. In parallel, the IL6 signaling pathway induces the expression of two cytokine receptor signaling inhibitors, SOCS1 and SOCS3, which inhibit JAK and terminate the activity of the IL6 signaling pathway as a negative feedback loop. Also activates the yes-associated protein 1 (YAP) and NOTCH pathways to control inflammation-induced epithelial regeneration, independently of STAT3. Mediates signals which regulate immune response, hematopoiesis, pain control and bone metabolism. Has a role in embryonic development. Essential for survival of motor and sensory neurons and for differentiation of astrocytes. Required for expression of TRPA1 in nociceptive neurons. Required for the maintenance of PTH1R expression in the osteoblast lineage and for the stimulation of PTH-induced osteoblast differentiation. Required for normal trabecular bone mass and cortical bone composition. This is Interleukin-6 receptor subunit beta from Rattus norvegicus (Rat).